Reading from the N-terminus, the 121-residue chain is Large ribosomal subunit protein uL14 (121 aa).

It belongs to the universal ribosomal protein uL14 family. Part of the 50S ribosomal subunit. Forms a cluster with proteins L3 and L19. In the 70S ribosome, L14 and L19 interact and together make contacts with the 16S rRNA in bridges B5 and B8.

In terms of biological role, binds to 23S rRNA. Forms part of two intersubunit bridges in the 70S ribosome. The polypeptide is Large ribosomal subunit protein uL14 (Azobacteroides pseudotrichonymphae genomovar. CFP2).